The chain runs to 133 residues: Small heat shock protein ibp (133 aa).

Residues 11–126 enclose the sHSP domain; that stretch reads EQPLSENPNY…KPKKISINEE (116 aa).

The protein belongs to the small heat shock protein (HSP20) family.

This Wigglesworthia glossinidia brevipalpis protein is Small heat shock protein ibp (ibp).